The following is a 348-amino-acid chain: Propane 2-monooxygenase, reductase component (348 aa).

One can recognise a 2Fe-2S ferredoxin-type domain in the interval 5-95 (HKINFDPVDI…DCTIELLNFD (91 aa)). Residues Cys39, Cys44, Cys47, and Cys79 each coordinate [2Fe-2S] cluster. Residues 105 to 206 (IQDVRTQVQA…TGPYGSFTLK (102 aa)) enclose the FAD-binding FR-type domain.

The protein belongs to the bacterial ring-hydroxylating dioxygenase ferredoxin reductase family. The propane 2-monooxygenase multicomponent enzyme system is composed of an electron transfer component and a monooxygenase component interacting with the effector protein MimD. The electron transfer component is composed of a reductase (MimB), and the monooxygenase component is formed by a large subunit (MimA) and a small subunit (MimC). FAD is required as a cofactor. The cofactor is [2Fe-2S] cluster.

Its function is as follows. Reductase component of the propane 2-monooxygenase multicomponent enzyme system which is involved in the degradation of propane via the O2-dependent hydroxylation of propane. Reductase catalyzes the transfer of electrons from NADH or NADPH to monooxygenase. In Mycolicibacterium smegmatis (strain ATCC 700084 / mc(2)155) (Mycobacterium smegmatis), this protein is Propane 2-monooxygenase, reductase component.